The chain runs to 166 residues: Regulatory protein RecX (166 aa).

This sequence belongs to the RecX family.

Its subcellular location is the cytoplasm. Modulates RecA activity. The protein is Regulatory protein RecX of Klebsiella pneumoniae (strain 342).